A 1350-amino-acid polypeptide reads, in one-letter code: Zinc finger protein Xfin (1350 aa).

The KRAB domain maps to 1–58; the sequence is MEEPKCLQREMYKSVMTENYQCVLSLGYPIRKPEIVSMMEVGEELWSKNDSARPGQKE. The segment at 47 to 68 is disordered; that stretch reads SKNDSARPGQKEVEGETPKESD. 37 C2H2-type zinc fingers span residues 108–130, 136–158, 164–186, 192–214, 220–242, 248–270, 276–298, 326–348, 354–376, 382–404, 410–432, 438–460, 466–488, 503–525, 531–553, 559–581, 587–609, 615–637, 643–665, 671–693, 699–721, 750–772, 778–800, 806–828, 834–856, 862–884, 890–912, 918–940, 988–1010, 1016–1038, 1044–1066, 1136–1158, 1164–1186, 1192–1214, 1220–1242, 1248–1270, and 1276–1298; these read HICSHYGKLFSCYAAVVRHQRMH, HHCPHCKKSFVQRSDFIKHQRTH, YQCVECQKKFTERSALVNHQRTH, YTCLDCQKTFNQRSALTKHRRTH, YRCSVCSKSFIQNSDLVKHLRTH, YECPLCVKRFAESSALMKHKRTH, FRCSECSRSFTHNSDLTAHMRKH, YSCSKCRKTFKRWKSFLNHQQTH, YLCSHCNKGFIQNSDLVKHFRTH, YQCAECHKGFIQKSDLVKHLRTH, FKCSHCDKKFTERSALAKHQRTH, YKCSDCGKEFTQRSNLILHQRIH, YKCTLCDRTFIQNSDLVKHQKVH, HKCSKCDLTFSHWSTFMKHSKLH, FQCAECKKGFTQKSDLVKHIRVH, FKCLLCKKSFSQNSDLHKHWRIH, FPCYTCDKSFTERSALIKHHRTH, HKCSVCQKGFIQKSALTKHSRTH, YPCTQCGKSFIQNSDLVKHQRIH, YHCTECNKRFTEGSSLVKHRRTH, YRCPQCEKTFIQSSDLVKHLVVH, YPCTECGKVFHQRPALLKHLRTH, YPCNECDKSFFQTSDLVKHLRTH, YHCPECNKGFIQNSDLVKHQRTH, YTCSQCDKGFIQRSALTKHMRTH, YKCEQCQKCFIQNSDLVKHQRIH, YHCPDCDKRFTEGSSLIKHQRIH, YPCGVCGKSFSQSSNLLKHLKCH, FKCNDCGKCFAHRSVLIKHVRIH, YKCSQCTRSFIQKSDLVKHYRTH, YKCGLCERSFVEKSALSRHQRVH, YSCSECGKCFTHRSVFLKHWRMH, YTCKECGKSFSQSSALVKHVRIH, YPCSTCGKSFIQKSDLAKHQRIH, YTCTVCGKKFIDRSSVVKHSRTH, YKCNECTKGFVQKSDLVKHMRTH, and YGCNCCDRSFSTHSASVRHQRMC.

It belongs to the krueppel C2H2-type zinc-finger protein family. Post-translationally, phosphorylated. Phosphorylation enhances RNA binding. As to expression, expressed in oocytes, and in specialized cell types such as neural retina cones in adults.

It localises to the cytoplasm. In terms of biological role, binds to poly-G sequences in RNA. May function in post-translational regulation processes. The protein is Zinc finger protein Xfin of Xenopus laevis (African clawed frog).